Here is a 506-residue protein sequence, read N- to C-terminus: Maturase K (506 aa).

It belongs to the intron maturase 2 family. MatK subfamily.

It localises to the plastid. It is found in the chloroplast. Usually encoded in the trnK tRNA gene intron. Probably assists in splicing its own and other chloroplast group II introns. The sequence is that of Maturase K from Ocimum basilicum (Sweet basil).